The chain runs to 105 residues: Nucleoid-associated protein lin2851 (105 aa).

Positions 1-16 (MRGMGNMQGMMKQMQK) are enriched in low complexity. The tract at residues 1–23 (MRGMGNMQGMMKQMQKMQKEMAK) is disordered.

The protein belongs to the YbaB/EbfC family. As to quaternary structure, homodimer.

The protein localises to the cytoplasm. Its subcellular location is the nucleoid. In terms of biological role, binds to DNA and alters its conformation. May be involved in regulation of gene expression, nucleoid organization and DNA protection. This is Nucleoid-associated protein lin2851 from Listeria innocua serovar 6a (strain ATCC BAA-680 / CLIP 11262).